The chain runs to 491 residues: Glutamate--tRNA ligase (491 aa).

Residues 9 to 19 carry the 'HIGH' region motif; it reads PSPTGTPHVGL. The short motif at 253–257 is the 'KMSKS' region element; it reads KLSKR. Lys256 provides a ligand contact to ATP.

It belongs to the class-I aminoacyl-tRNA synthetase family. Glutamate--tRNA ligase type 1 subfamily. Monomer.

It localises to the cytoplasm. The catalysed reaction is tRNA(Glu) + L-glutamate + ATP = L-glutamyl-tRNA(Glu) + AMP + diphosphate. In terms of biological role, catalyzes the attachment of glutamate to tRNA(Glu) in a two-step reaction: glutamate is first activated by ATP to form Glu-AMP and then transferred to the acceptor end of tRNA(Glu). The sequence is that of Glutamate--tRNA ligase from Mycolicibacterium gilvum (strain PYR-GCK) (Mycobacterium gilvum (strain PYR-GCK)).